Reading from the N-terminus, the 501-residue chain is Pyruvate kinase (501 aa).

Arg50 is a substrate binding site. Residues Asn52, Ser54, Asp85, and Thr86 each contribute to the K(+) site. ATP is bound at residue Asn52–His55. Residues Arg92 and Lys178 each contribute to the ATP site. Glu243 lines the Mg(2+) pocket. Gly266, Asp267, and Thr299 together coordinate substrate. Asp267 serves as a coordination point for Mg(2+).

It belongs to the pyruvate kinase family. In terms of assembly, homotetramer. Requires Mg(2+) as cofactor. K(+) is required as a cofactor.

It carries out the reaction pyruvate + ATP = phosphoenolpyruvate + ADP + H(+). It functions in the pathway carbohydrate degradation; glycolysis; pyruvate from D-glyceraldehyde 3-phosphate: step 5/5. The sequence is that of Pyruvate kinase (PYK1) from Lachancea kluyveri (strain ATCC 58438 / CBS 3082 / BCRC 21498 / NBRC 1685 / JCM 7257 / NCYC 543 / NRRL Y-12651) (Yeast).